Here is a 576-residue protein sequence, read N- to C-terminus: Arginine--tRNA ligase (576 aa).

A 'HIGH' region motif is present at residues 126-136 (ANPTGPMHIGH).

Belongs to the class-I aminoacyl-tRNA synthetase family. In terms of assembly, monomer.

The protein resides in the cytoplasm. The enzyme catalyses tRNA(Arg) + L-arginine + ATP = L-arginyl-tRNA(Arg) + AMP + diphosphate. This is Arginine--tRNA ligase from Rickettsia typhi (strain ATCC VR-144 / Wilmington).